The following is a 176-amino-acid chain: Shikimate kinase (176 aa).

Position 14–19 (G14–S19) interacts with ATP. Residue S18 participates in Mg(2+) binding. The substrate site is built by D36, R60, and G82. R120 serves as a coordination point for ATP. R138 is a binding site for substrate.

It belongs to the shikimate kinase family. As to quaternary structure, monomer. Mg(2+) is required as a cofactor.

It localises to the cytoplasm. It carries out the reaction shikimate + ATP = 3-phosphoshikimate + ADP + H(+). The protein operates within metabolic intermediate biosynthesis; chorismate biosynthesis; chorismate from D-erythrose 4-phosphate and phosphoenolpyruvate: step 5/7. Its function is as follows. Catalyzes the specific phosphorylation of the 3-hydroxyl group of shikimic acid using ATP as a cosubstrate. The chain is Shikimate kinase from Dehalococcoides mccartyi (strain ATCC BAA-2266 / KCTC 15142 / 195) (Dehalococcoides ethenogenes (strain 195)).